A 346-amino-acid chain; its full sequence is Ribosomal RNA small subunit methyltransferase H (346 aa).

S-adenosyl-L-methionine is bound by residues 46 to 48 (GGY), Asp-63, Phe-90, Asp-113, and Gln-120. Residues 270-346 (GGSAGSRHMP…LPETNELARS (77 aa)) form a disordered region.

It belongs to the methyltransferase superfamily. RsmH family.

The protein localises to the cytoplasm. It carries out the reaction cytidine(1402) in 16S rRNA + S-adenosyl-L-methionine = N(4)-methylcytidine(1402) in 16S rRNA + S-adenosyl-L-homocysteine + H(+). Specifically methylates the N4 position of cytidine in position 1402 (C1402) of 16S rRNA. The chain is Ribosomal RNA small subunit methyltransferase H from Brucella suis (strain ATCC 23445 / NCTC 10510).